We begin with the raw amino-acid sequence, 494 residues long: Glycerol kinase (494 aa).

An ADP-binding site is contributed by Thr-13. Thr-13, Thr-14, and Ser-15 together coordinate ATP. Thr-13 contributes to the sn-glycerol 3-phosphate binding site. An ADP-binding site is contributed by Arg-17. The sn-glycerol 3-phosphate site is built by Arg-83, Glu-84, Tyr-135, and Asp-244. 5 residues coordinate glycerol: Arg-83, Glu-84, Tyr-135, Asp-244, and Gln-245. Thr-266 and Gly-309 together coordinate ADP. 4 residues coordinate ATP: Thr-266, Gly-309, Gln-313, and Gly-410. Residues Gly-410 and Asn-414 each coordinate ADP.

The protein belongs to the FGGY kinase family.

It carries out the reaction glycerol + ATP = sn-glycerol 3-phosphate + ADP + H(+). It participates in polyol metabolism; glycerol degradation via glycerol kinase pathway; sn-glycerol 3-phosphate from glycerol: step 1/1. Inhibited by fructose 1,6-bisphosphate (FBP). Key enzyme in the regulation of glycerol uptake and metabolism. Catalyzes the phosphorylation of glycerol to yield sn-glycerol 3-phosphate. The protein is Glycerol kinase of Shewanella sp. (strain MR-7).